A 207-amino-acid chain; its full sequence is Probable molybdenum cofactor guanylyltransferase (207 aa).

GTP is bound by residues 9–11 (LAG), lysine 21, and aspartate 97. A Mg(2+)-binding site is contributed by aspartate 97.

The protein belongs to the MobA family. Mg(2+) serves as cofactor.

The protein localises to the cytoplasm. It catalyses the reaction Mo-molybdopterin + GTP + H(+) = Mo-molybdopterin guanine dinucleotide + diphosphate. In terms of biological role, transfers a GMP moiety from GTP to Mo-molybdopterin (Mo-MPT) cofactor (Moco or molybdenum cofactor) to form Mo-molybdopterin guanine dinucleotide (Mo-MGD) cofactor. The sequence is that of Probable molybdenum cofactor guanylyltransferase from Nostoc sp. (strain PCC 7120 / SAG 25.82 / UTEX 2576).